Here is a 587-residue protein sequence, read N- to C-terminus: Inorganic phosphate transporter PHO84 (587 aa).

The Extracellular portion of the chain corresponds to 1–67 (MSSVNKDTIH…FGWQQVKTIS (67 aa)). Residue lysine 6 forms a Glycyl lysine isopeptide (Lys-Gly) (interchain with G-Cter in ubiquitin) linkage. A helical membrane pass occupies residues 68–88 (IAGVGFLTDSYDIFAINLGIT). Residues 89–108 (MMSYVYWHGSMPGPSQTLLK) are Cytoplasmic-facing. The helical transmembrane segment at 109–129 (VSTSVGTVIGQFGFGTLADIV) threads the bilayer. The Extracellular segment spans residues 130 to 133 (GRKR). A helical transmembrane segment spans residues 134–154 (IYGMELIIMIVCTILQTTVAH). The Cytoplasmic portion of the chain corresponds to 155–156 (SP). Residues 157 to 177 (AINFVAVLTFYRIVMGIGIGG) traverse the membrane as a helical segment. The Extracellular segment spans residues 178 to 201 (DYPLSSIITSEFATTKWRGAIMGA). A helical transmembrane segment spans residues 202–222 (VFANQAWGQISGGIIALILVA). Topologically, residues 223-250 (AYKGELEYANSGAECDARCQKACDQMWR) are cytoplasmic. A helical transmembrane segment spans residues 251 to 271 (ILIGLGTVLGLACLYFRLTIP). Residues 272–345 (ESPRYQLDVN…RHFGQWKYGK (74 aa)) are Extracellular-facing. Residue lysine 298 forms a Glycyl lysine isopeptide (Lys-Gly) (interchain with G-Cter in ubiquitin) linkage. Threonine 302 is modified (phosphothreonine). Phosphoserine occurs at positions 303 and 316. Position 317 is a phosphothreonine (threonine 317). Residue serine 321 is modified to Phosphoserine. Residues 346-366 (ILLGTAGSWFTLDVAFYGLSL) form a helical membrane-spanning segment. Residues 367–395 (NSAVILQTIGYAGSKNVYKKLYDTAVGNL) lie on the Cytoplasmic side of the membrane. Residues 396–416 (ILICAGSLPGYWVSVFTVDII) form a helical membrane-spanning segment. The Extracellular segment spans residues 417-419 (GRK). Residues 420–440 (PIQLAGFIILTALFCVIGFAY) form a helical membrane-spanning segment. Residues 441–442 (HK) lie on the Cytoplasmic side of the membrane. Residues 443-463 (LGDHGLLALYVICQFFQNFGP) traverse the membrane as a helical segment. The Extracellular segment spans residues 464 to 485 (NTTTFIVPGECFPTRYRSTAHG). The chain crosses the membrane as a helical span at residues 486-506 (ISAASGKVGAIIAQTALGTLI). The Cytoplasmic segment spans residues 507–522 (DHNCARDGKPTNCWLP). Residues 523–543 (HVMEIFALFMLLGIFTTLLIP) form a helical membrane-spanning segment. The Extracellular segment spans residues 544-587 (ETKRKTLEEINELYHDEIDPATLNFRNKNNDIESSSPSQLQHEA). Residues 568–587 (FRNKNNDIESSSPSQLQHEA) form a disordered region. 3 positions are modified to phosphoserine: serine 577, serine 579, and serine 581.

The protein belongs to the major facilitator superfamily. Phosphate:H(+) symporter (TC 2.A.1.9) family. May function as a monomer. Phosphorylated; phosphorylation increases after phosphate addition to the growth medium. Post-translationally, ubiquitinated in a phosphate-dependent manner; ubiquitination may influence the trafficking of PHO84 to the cell membrane and serve as a signal for endocytosis and internalization.

The protein localises to the cell membrane. Its subcellular location is the vacuole. It carries out the reaction phosphate(in) + H(+)(in) = phosphate(out) + H(+)(out). It catalyses the reaction Mn(2+)(in) = Mn(2+)(out). The enzyme catalyses Zn(2+)(in) = Zn(2+)(out). The catalysed reaction is Cu(2+)(in) = Cu(2+)(out). It carries out the reaction Co(2+)(in) = Co(2+)(out). With respect to regulation, transport activity is inhibited in the presence of the protonophore carbonylcyanide m-chlorophenylhydrazone. Transport activity is inhibited by glycerol-3-phosphate. Transport activity is inhibited by phosphonoacetic acid. Signaling activity is stimulated by glycerol-3-phosphate which acts as a nontransported PHO84 agonist that can trigger PKA signaling. Signaling activity is stimulated by arsenate. Its function is as follows. Proton-coupled high-affinity transporter for external inorganic phosphate. Acts as a transceptor, a membrane protein that in addition to its transporter activity also possesses receptor-like signaling activity; mediates activation of the protein kinase A (PKA) pathway targets during growth induction, triggered by phosphate addition to cells growth-arrested due to previous phosphate starvation. Is not an essential protein, since constitutive, low affinity phosphate transporters exist in yeast. Can function as a low affinity metal transporter that transports manganese, zinc, cobalt and copper. Plays a role in manganese homeostasis predominantly under manganese surplus conditions. The polypeptide is Inorganic phosphate transporter PHO84 (PHO84) (Saccharomyces cerevisiae (strain ATCC 204508 / S288c) (Baker's yeast)).